Here is a 168-residue protein sequence, read N- to C-terminus: Group 2 truncated hemoglobin 3-1 (168 aa).

His98 is a binding site for heme b.

The protein belongs to the truncated hemoglobin family. Group II subfamily. In terms of assembly, homodimer when ferric. Mainly expressed in root nodules, but barely in leaves, roots, stems, flowers and fruits.

In terms of biological role, hemoglobin-like protein that exhibits an unusual concentration-independent binding of O(2) and CO. Required for general plant development and during nodulation. May promote shoot organogenesis from root explants. The polypeptide is Group 2 truncated hemoglobin 3-1 (Lotus japonicus (Lotus corniculatus var. japonicus)).